A 324-amino-acid polypeptide reads, in one-letter code: Glyoxylate/hydroxypyruvate reductase B (324 aa).

Catalysis depends on residues arginine 237 and glutamate 266. Histidine 285 acts as the Proton donor in catalysis.

It belongs to the D-isomer specific 2-hydroxyacid dehydrogenase family. GhrB subfamily. In terms of assembly, homodimer.

It localises to the cytoplasm. It catalyses the reaction glycolate + NADP(+) = glyoxylate + NADPH + H(+). The catalysed reaction is (R)-glycerate + NAD(+) = 3-hydroxypyruvate + NADH + H(+). It carries out the reaction (R)-glycerate + NADP(+) = 3-hydroxypyruvate + NADPH + H(+). Catalyzes the NADPH-dependent reduction of glyoxylate and hydroxypyruvate into glycolate and glycerate, respectively. The polypeptide is Glyoxylate/hydroxypyruvate reductase B (Salmonella paratyphi B (strain ATCC BAA-1250 / SPB7)).